A 369-amino-acid chain; its full sequence is MPERDPILLTPGPLTTSRMTRDAMLRDWGSWDAAFNRLTKSVCADLVRIAGGGDAYVCVPLQGSGTFAVEATLGTLVPRDARVLVPNNGAYCARIAAILRRLGVAHVELPFAEDEPASAHAIDAALARDARLTHVALVHLETSAGLLNPLDDIAAVCRARGKALIVDAMSSFGALPIALAASGIDALISASGKCLEGVPGMGFAIVRRSALEAAEGRSPSVALDLHDQYAYMQRTSQWRFTPPTHVLAALRAALDQFFDEGGQPARGARYARNCATLVDGMRALGFEPFLDARAQASVIVTFYAPADPAYAFPAFYAAVRDAGYVLYPGKLTTADTFRVGCIGALGADEMRGAVAAIGGALESLGIAMR.

Lys193 bears the N6-(pyridoxal phosphate)lysine mark.

This sequence belongs to the class-V pyridoxal-phosphate-dependent aminotransferase family. PhnW subfamily. In terms of assembly, homodimer. It depends on pyridoxal 5'-phosphate as a cofactor.

The catalysed reaction is (2-aminoethyl)phosphonate + pyruvate = phosphonoacetaldehyde + L-alanine. In terms of biological role, involved in phosphonate degradation. In Burkholderia pseudomallei (strain 668), this protein is 2-aminoethylphosphonate--pyruvate transaminase.